The sequence spans 281 residues: uncharacterized protein (281 aa).

Residues proline 11 to isoleucine 30 form a disordered region. The span at proline 20 to isoleucine 30 shows a compositional bias: pro residues. The next 7 membrane-spanning stretches (helical) occupy residues threonine 58–tryptophan 78, threonine 88–leucine 107, methionine 117–phenylalanine 137, alanine 145–tryptophan 165, leucine 171–glutamine 191, tyrosine 196–isoleucine 216, and valine 248–alanine 268.

The protein belongs to the cytomegalovirus US12 family.

It is found in the membrane. This is an uncharacterized protein from Human cytomegalovirus (strain AD169) (HHV-5).